The primary structure comprises 451 residues: Eukaryotic translation initiation factor 3 subunit E (451 aa).

The PCI domain maps to 245–425 (PFFNHEPARD…GTVVMNHPPS (181 aa)).

The protein belongs to the eIF-3 subunit E family. In terms of assembly, component of the eukaryotic translation initiation factor 3 (eIF-3) complex.

The protein localises to the cytoplasm. Its function is as follows. Component of the eukaryotic translation initiation factor 3 (eIF-3) complex, which is involved in protein synthesis of a specialized repertoire of mRNAs and, together with other initiation factors, stimulates binding of mRNA and methionyl-tRNAi to the 40S ribosome. The eIF-3 complex specifically targets and initiates translation of a subset of mRNAs involved in cell proliferation. This is Eukaryotic translation initiation factor 3 subunit E (int6) from Sclerotinia sclerotiorum (strain ATCC 18683 / 1980 / Ss-1) (White mold).